A 614-amino-acid chain; its full sequence is Probable Xaa-Pro aminopeptidase P (614 aa).

4 residues coordinate Mn(2+): aspartate 409, aspartate 420, glutamate 518, and glutamate 532.

The protein belongs to the peptidase M24B family. Mn(2+) serves as cofactor.

It catalyses the reaction Release of any N-terminal amino acid, including proline, that is linked to proline, even from a dipeptide or tripeptide.. Catalyzes the removal of a penultimate prolyl residue from the N-termini of peptides. The polypeptide is Probable Xaa-Pro aminopeptidase P (ampp) (Aspergillus niger (strain ATCC MYA-4892 / CBS 513.88 / FGSC A1513)).